The sequence spans 466 residues: Arginine biosynthesis bifunctional protein ArgJ, mitochondrial (466 aa).

Substrate is bound by residues threonine 194, lysine 223, threonine 234, glutamate 321, asparagine 461, and threonine 466. The active-site Nucleophile is the threonine 234.

The protein belongs to the ArgJ family. In terms of assembly, heterodimer of an alpha and a beta chain. In terms of processing, the alpha and beta chains are autoproteolytically processed from a single precursor protein within the mitochondrion.

The protein localises to the mitochondrion matrix. The enzyme catalyses N(2)-acetyl-L-ornithine + L-glutamate = N-acetyl-L-glutamate + L-ornithine. The catalysed reaction is L-glutamate + acetyl-CoA = N-acetyl-L-glutamate + CoA + H(+). Its pathway is amino-acid biosynthesis; L-arginine biosynthesis; L-ornithine and N-acetyl-L-glutamate from L-glutamate and N(2)-acetyl-L-ornithine (cyclic): step 1/1. It functions in the pathway amino-acid biosynthesis; L-arginine biosynthesis; N(2)-acetyl-L-ornithine from L-glutamate: step 1/4. Its function is as follows. Catalyzes two activities which are involved in the cyclic version of arginine biosynthesis: the synthesis of acetylglutamate from glutamate and acetyl-CoA, and of ornithine by transacetylation between acetylornithine and glutamate. The chain is Arginine biosynthesis bifunctional protein ArgJ, mitochondrial from Aspergillus flavus (strain ATCC 200026 / FGSC A1120 / IAM 13836 / NRRL 3357 / JCM 12722 / SRRC 167).